The following is a 390-amino-acid chain: MVDVAESRRTQRAEGPRTIFAIATANPPNCVEQSTYPDFYFKITNSEHKVELKEKFQRMDDKSMIKRRYMYLTEEILKENPNVCEYMAPSLDARQDMFVVEVPRLGKEAAVKAIKEWGQPKSKITHLIVCTTSGVDMPGADYQLTKLLGLRPHVKRYMMYQQGCFAGGTVLRLAKDLAENNKGARVLVVCSEVTAVTFRGPSDTHLDSLVGQALFGDGAAALIVGSDPIPEIEKPLFELIWTAQTIAPDSEGAIDGHLREVGLTFHLLKDVPGIVSKNIDKALVEAFQPLGISDYNSIFWIAHPGGPAILDQVEQKLAFKPEKMRATREVLSEYGNMSSACVLFILDEMRKKSAQNGLKTTGEGLEWGVLFGFGPGLTIETVVLLRSVAI.

The active site involves Cys-164.

It belongs to the thiolase-like superfamily. Chalcone/stilbene synthases family.

The catalysed reaction is (E)-4-coumaroyl-CoA + 3 malonyl-CoA + 3 H(+) = 2',4,4',6'-tetrahydroxychalcone + 3 CO2 + 4 CoA. The protein operates within secondary metabolite biosynthesis; flavonoid biosynthesis. The primary product of this enzyme is 4,2',4',6'-tetrahydroxychalcone (also termed naringenin-chalcone or chalcone) which can under specific conditions spontaneously isomerize into naringenin. In Onobrychis viciifolia (Common sainfoin), this protein is Chalcone synthase (CHS).